We begin with the raw amino-acid sequence, 465 residues long: MAIQLTRRGALSLLLFLTPAVMPTWYAGSGYYPDESYNEVYAEEVPQTPILDYKVPRWCYTLNIQDGEATCYSPRGGNYHSSLGTRCELSCDRGFRLIGRRSVQCLPSRRWSGTAYCRQMRCHALPFITSGTYTCTNGVLLDSRCDYSCSSGYHLEGDRSRICMEDGRWSGGEPVCVDIDPPKIRCPHSREKMAEPEKLTARVYWDPPVVKDSADGTITRLTLRGPEPGSHFPEGEHVIRYTAYDRAYNRASCKFIVKVQVRRCPTLKPPLHGYLTCTSAGDNYGATCEYHCDGGYERQGTSSRVCQSSRQWSGSPPVCVPMKINVNVNSAAGLLDQFYEKRRLLIISAPDPSNRYYKMQISMLQQSTCGLDLRHVTIIELVGQPPQEVGRIREHQLSANIIEELRQFQHLTRSYFNMVLIDKQGIDRERYMEPVTPEEIFTFIDDYLLSNEELIQRREQRDICD.

The signal sequence occupies residues 1–23 (MAIQLTRRGALSLLLFLTPAVMP). Sushi domains follow at residues 69 to 119 (ATCY…YCRQ), 120 to 178 (MRCH…VCVD), and 262 to 321 (RRCP…VCVP). Cystine bridges form between cysteine 71–cysteine 105, cysteine 91–cysteine 117, cysteine 122–cysteine 163, and cysteine 149–cysteine 176. Residues 177 to 261 (VDIDPPKIRC…SCKFIVKVQV (85 aa)) enclose the HYR domain. 2 disulfides stabilise this stretch: cysteine 264/cysteine 306 and cysteine 292/cysteine 319.

Forms homooligomers. Interacts with PLAUR (via the UPAR/Ly6 domains), ADAMTS4 and CTSB. Interacts with HGF; the interaction increases the mitogenic activity of HGF. In terms of processing, contains chondroitin sulfate chains.

The protein localises to the secreted. It localises to the cytoplasm. Its subcellular location is the cell surface. It is found in the synapse. Acts as a ligand for the urokinase plasminogen activator surface receptor. Plays a role in angiogenesis by inducing endothelial cell migration and the formation of vascular network (cords). Involved in cellular migration and adhesion. Increases the phosphorylation levels of FAK. Interacts with and increases the mitogenic activity of HGF. Promotes synapse formation. The polypeptide is Sushi repeat-containing protein SRPX2 (SRPX2) (Bos taurus (Bovine)).